Reading from the N-terminus, the 357-residue chain is Peptide chain release factor 1 (357 aa).

The residue at position 236 (glutamine 236) is an N5-methylglutamine.

It belongs to the prokaryotic/mitochondrial release factor family. Methylated by PrmC. Methylation increases the termination efficiency of RF1.

Its subcellular location is the cytoplasm. In terms of biological role, peptide chain release factor 1 directs the termination of translation in response to the peptide chain termination codons UAG and UAA. This is Peptide chain release factor 1 from Mycobacterium marinum (strain ATCC BAA-535 / M).